Here is a 291-residue protein sequence, read N- to C-terminus: 33 kDa chaperonin (291 aa).

2 disulfide bridges follow: Cys237–Cys239 and Cys270–Cys273.

Belongs to the HSP33 family. In terms of processing, under oxidizing conditions two disulfide bonds are formed involving the reactive cysteines. Under reducing conditions zinc is bound to the reactive cysteines and the protein is inactive.

Its subcellular location is the cytoplasm. Functionally, redox regulated molecular chaperone. Protects both thermally unfolding and oxidatively damaged proteins from irreversible aggregation. Plays an important role in the bacterial defense system toward oxidative stress. This Bacillus anthracis (strain A0248) protein is 33 kDa chaperonin.